Reading from the N-terminus, the 621-residue chain is (-)-beta-phellandrene synthase 1, chloroplastic (621 aa).

The N-terminal 49 residues, 1–49 (MALALVSVAPLVSMRRSLFSSPYELKSIDKTIPNLVMCRKRMSGTPSIR), are a transit peptide targeting the chloroplast. Positions 372, 376, and 524 each coordinate Mg(2+). The DDXXD motif motif lies at 372 to 376 (DDIYD).

Belongs to the terpene synthase family. Tpsd subfamily. Requires Mg(2+) as cofactor. It depends on Mn(2+) as a cofactor.

It is found in the plastid. The protein resides in the chloroplast. The enzyme catalyses (2E)-geranyl diphosphate = (-)-beta-phellandrene + diphosphate. The protein operates within terpene metabolism; oleoresin biosynthesis. Its pathway is secondary metabolite biosynthesis; terpenoid biosynthesis. In terms of biological role, monoterpene synthase (TPS) involved in the biosynthesis of monoterpene natural products included in conifer oleoresin secretions and volatile emissions; these compounds contribute to biotic and abiotic stress defense against herbivores and pathogens. Catalyzes the conversion of (2E)-geranyl diphosphate (GPP) to (-)-beta-phellandrene and, to a lower extent, to (-)-alpha-phellandrene. In Pinus contorta (Shore pine), this protein is (-)-beta-phellandrene synthase 1, chloroplastic.